Consider the following 103-residue polypeptide: NAD(P)H-quinone oxidoreductase subunit 4L, organellar chromatophore (103 aa).

Helical transmembrane passes span 3-23 (IMLE…VWGL), 32-52 (VLMS…AFSN), and 63-83 (VFAI…LAIL).

Belongs to the complex I subunit 4L family. In terms of assembly, NDH is composed of at least 16 different subunits, 5 of which are encoded in the nucleus.

It is found in the plastid. Its subcellular location is the organellar chromatophore thylakoid membrane. The catalysed reaction is a plastoquinone + NADH + (n+1) H(+)(in) = a plastoquinol + NAD(+) + n H(+)(out). It carries out the reaction a plastoquinone + NADPH + (n+1) H(+)(in) = a plastoquinol + NADP(+) + n H(+)(out). Functionally, NDH shuttles electrons from NAD(P)H:plastoquinone, via FMN and iron-sulfur (Fe-S) centers, to quinones in the photosynthetic chain and possibly in a chloroplast respiratory chain. The immediate electron acceptor for the enzyme in this species is believed to be plastoquinone. Couples the redox reaction to proton translocation, and thus conserves the redox energy in a proton gradient. The chain is NAD(P)H-quinone oxidoreductase subunit 4L, organellar chromatophore from Paulinella chromatophora.